We begin with the raw amino-acid sequence, 297 residues long: Putative S-adenosyl-L-methionine-dependent methyltransferase MSMEG_0614/MSMEI_0598 (297 aa).

Residues Asp125 and 154 to 155 each bind S-adenosyl-L-methionine; that span reads DL.

The protein belongs to the UPF0677 family.

In terms of biological role, exhibits S-adenosyl-L-methionine-dependent methyltransferase activity. The chain is Putative S-adenosyl-L-methionine-dependent methyltransferase MSMEG_0614/MSMEI_0598 from Mycolicibacterium smegmatis (strain ATCC 700084 / mc(2)155) (Mycobacterium smegmatis).